The primary structure comprises 516 residues: Nucleolar complex protein 4 homolog (516 aa).

3 helical membrane passes run 296–316, 347–367, and 375–395; these read SACD…FILI, FFHL…LVAA, and LALT…CNLL.

It belongs to the CBF/MAK21 family.

The protein localises to the nucleus membrane. Its subcellular location is the nucleus. It localises to the nucleolus. The sequence is that of Nucleolar complex protein 4 homolog (Noc4l) from Mus musculus (Mouse).